We begin with the raw amino-acid sequence, 204 residues long: Small ribosomal subunit protein uS4 (204 aa).

Residues 25–45 (AVPSRRAYPPGQHGQARKKRS) form a disordered region. Positions 92–152 (MRLDNIIFRL…NKENSRRLAE (61 aa)) constitute an S4 RNA-binding domain.

Belongs to the universal ribosomal protein uS4 family. Part of the 30S ribosomal subunit. Contacts protein S5. The interaction surface between S4 and S5 is involved in control of translational fidelity.

In terms of biological role, one of the primary rRNA binding proteins, it binds directly to 16S rRNA where it nucleates assembly of the body of the 30S subunit. Functionally, with S5 and S12 plays an important role in translational accuracy. The polypeptide is Small ribosomal subunit protein uS4 (Cyanothece sp. (strain PCC 7425 / ATCC 29141)).